Reading from the N-terminus, the 206-residue chain is Small ribosomal subunit protein uS4 (206 aa).

The interval 28 to 48 (YMERRPYGPGEHGRARKKQDS) is disordered. Positions 95 to 160 (MRLDALVLRA…MPPFQVAAAG (66 aa)) constitute an S4 RNA-binding domain.

It belongs to the universal ribosomal protein uS4 family. As to quaternary structure, part of the 30S ribosomal subunit. Contacts protein S5. The interaction surface between S4 and S5 is involved in control of translational fidelity.

One of the primary rRNA binding proteins, it binds directly to 16S rRNA where it nucleates assembly of the body of the 30S subunit. In terms of biological role, with S5 and S12 plays an important role in translational accuracy. This is Small ribosomal subunit protein uS4 from Paenarthrobacter aurescens (strain TC1).